Here is a 435-residue protein sequence, read N- to C-terminus: Ribosomal protein uS12 methylthiotransferase RimO (435 aa).

Residues K2–Y118 enclose the MTTase N-terminal domain. Positions 11, 47, 81, 150, 154, and 157 each coordinate [4Fe-4S] cluster. Residues I136 to N364 form the Radical SAM core domain. Residues E367–E435 form the TRAM domain.

The protein belongs to the methylthiotransferase family. RimO subfamily. The cofactor is [4Fe-4S] cluster.

The protein localises to the cytoplasm. It carries out the reaction L-aspartate(89)-[ribosomal protein uS12]-hydrogen + (sulfur carrier)-SH + AH2 + 2 S-adenosyl-L-methionine = 3-methylsulfanyl-L-aspartate(89)-[ribosomal protein uS12]-hydrogen + (sulfur carrier)-H + 5'-deoxyadenosine + L-methionine + A + S-adenosyl-L-homocysteine + 2 H(+). Catalyzes the methylthiolation of an aspartic acid residue of ribosomal protein uS12. This Petrotoga mobilis (strain DSM 10674 / SJ95) protein is Ribosomal protein uS12 methylthiotransferase RimO.